We begin with the raw amino-acid sequence, 363 residues long: GTPase Obg (363 aa).

An Obg domain is found at 1-159; it reads MKFIDEAKIY…LELRLELRVL (159 aa). In terms of domain architecture, OBG-type G spans 160–338; that stretch reads ADVGLLGLPN…LIYAISEALE (179 aa). GTP is bound by residues 166 to 173, 191 to 195, 213 to 216, 284 to 287, and 319 to 321; these read GLPNAGKS, FTTLH, DVPG, NKLD, and AAI. Mg(2+) is bound by residues S173 and T193. The segment at 342-363 is disordered; sequence RPEIGDLDDNDEDSDEIIRDTE. A compositionally biased stretch (acidic residues) spans 346 to 356; the sequence is GDLDDNDEDSD.

This sequence belongs to the TRAFAC class OBG-HflX-like GTPase superfamily. OBG GTPase family. Monomer. It depends on Mg(2+) as a cofactor.

The protein resides in the cytoplasm. Its function is as follows. An essential GTPase which binds GTP, GDP and possibly (p)ppGpp with moderate affinity, with high nucleotide exchange rates and a fairly low GTP hydrolysis rate. Plays a role in control of the cell cycle, stress response, ribosome biogenesis and in those bacteria that undergo differentiation, in morphogenesis control. This Dechloromonas aromatica (strain RCB) protein is GTPase Obg.